We begin with the raw amino-acid sequence, 88 residues long: ATP synthase subunit c 1 (88 aa).

The next 2 membrane-spanning stretches (helical) occupy residues 4–24 (FTWV…GTAI) and 53–73 (IGLA…MIIL).

It belongs to the ATPase C chain family. F-type ATPases have 2 components, F(1) - the catalytic core - and F(0) - the membrane proton channel. F(1) has five subunits: alpha(3), beta(3), gamma(1), delta(1), epsilon(1). F(0) has three main subunits: a(1), b(2) and c(10-14). The alpha and beta chains form an alternating ring which encloses part of the gamma chain. F(1) is attached to F(0) by a central stalk formed by the gamma and epsilon chains, while a peripheral stalk is formed by the delta and b chains.

Its subcellular location is the cell inner membrane. Its function is as follows. F(1)F(0) ATP synthase produces ATP from ADP in the presence of a proton or sodium gradient. F-type ATPases consist of two structural domains, F(1) containing the extramembraneous catalytic core and F(0) containing the membrane proton channel, linked together by a central stalk and a peripheral stalk. During catalysis, ATP synthesis in the catalytic domain of F(1) is coupled via a rotary mechanism of the central stalk subunits to proton translocation. Functionally, key component of the F(0) channel; it plays a direct role in translocation across the membrane. A homomeric c-ring of between 10-14 subunits forms the central stalk rotor element with the F(1) delta and epsilon subunits. The protein is ATP synthase subunit c 1 of Syntrophotalea carbinolica (strain DSM 2380 / NBRC 103641 / GraBd1) (Pelobacter carbinolicus).